The chain runs to 337 residues: Ketol-acid reductoisomerase (NADP(+)) (337 aa).

Residues 3–183 (VEMFYDDDAD…GGARAGVIKT (181 aa)) enclose the KARI N-terminal Rossmann domain. Residues 26–29 (YGSQ), lysine 49, serine 52, serine 54, and 84–87 (DTAQ) contribute to the NADP(+) site. Histidine 109 is a catalytic residue. Residue glycine 135 participates in NADP(+) binding. One can recognise a KARI C-terminal knotted domain in the interval 184-329 (TFKEETETDL…KKLRDLMSWV (146 aa)). Positions 192, 196, 228, and 232 each coordinate Mg(2+). Serine 253 provides a ligand contact to substrate.

It belongs to the ketol-acid reductoisomerase family. The cofactor is Mg(2+).

It carries out the reaction (2R)-2,3-dihydroxy-3-methylbutanoate + NADP(+) = (2S)-2-acetolactate + NADPH + H(+). The enzyme catalyses (2R,3R)-2,3-dihydroxy-3-methylpentanoate + NADP(+) = (S)-2-ethyl-2-hydroxy-3-oxobutanoate + NADPH + H(+). It functions in the pathway amino-acid biosynthesis; L-isoleucine biosynthesis; L-isoleucine from 2-oxobutanoate: step 2/4. The protein operates within amino-acid biosynthesis; L-valine biosynthesis; L-valine from pyruvate: step 2/4. Involved in the biosynthesis of branched-chain amino acids (BCAA). Catalyzes an alkyl-migration followed by a ketol-acid reduction of (S)-2-acetolactate (S2AL) to yield (R)-2,3-dihydroxy-isovalerate. In the isomerase reaction, S2AL is rearranged via a Mg-dependent methyl migration to produce 3-hydroxy-3-methyl-2-ketobutyrate (HMKB). In the reductase reaction, this 2-ketoacid undergoes a metal-dependent reduction by NADPH to yield (R)-2,3-dihydroxy-isovalerate. This is Ketol-acid reductoisomerase (NADP(+)) from Rhodococcus opacus (strain B4).